The following is a 124-amino-acid chain: Small ribosomal subunit protein uS12 (124 aa).

A disordered region spans residues 1-42 (MPTTQQLIRKGRKTEEETSDAPALEGSPQRRGVCTRVYTTTP). Residue Asp89 is modified to 3-methylthioaspartic acid. Positions 105–124 (AGVEERRQGRSKYGTKKPRE) are disordered. Residues 113–124 (GRSKYGTKKPRE) show a composition bias toward basic residues.

Belongs to the universal ribosomal protein uS12 family. In terms of assembly, part of the 30S ribosomal subunit. Contacts proteins S8 and S17. May interact with IF1 in the 30S initiation complex.

Its function is as follows. With S4 and S5 plays an important role in translational accuracy. Interacts with and stabilizes bases of the 16S rRNA that are involved in tRNA selection in the A site and with the mRNA backbone. Located at the interface of the 30S and 50S subunits, it traverses the body of the 30S subunit contacting proteins on the other side and probably holding the rRNA structure together. The combined cluster of proteins S8, S12 and S17 appears to hold together the shoulder and platform of the 30S subunit. The chain is Small ribosomal subunit protein uS12 from Salinibacter ruber (strain DSM 13855 / M31).